We begin with the raw amino-acid sequence, 171 residues long: Putative phosphoesterase ABC1741 (171 aa).

Histidine 34 acts as the Proton donor in catalysis. 2 short sequence motifs (HXTX) span residues 34–37 (HITL) and 116–119 (HITI). The active-site Proton acceptor is the histidine 116.

The protein belongs to the 2H phosphoesterase superfamily. YjcG family.

The protein is Putative phosphoesterase ABC1741 of Shouchella clausii (strain KSM-K16) (Alkalihalobacillus clausii).